The following is a 348-amino-acid chain: Mannonate dehydratase (348 aa).

It belongs to the mannonate dehydratase family. Requires Fe(2+) as cofactor. It depends on Mn(2+) as a cofactor.

It catalyses the reaction D-mannonate = 2-dehydro-3-deoxy-D-gluconate + H2O. The protein operates within carbohydrate metabolism; pentose and glucuronate interconversion. Functionally, catalyzes the dehydration of D-mannonate. The sequence is that of Mannonate dehydratase from Staphylococcus haemolyticus (strain JCSC1435).